We begin with the raw amino-acid sequence, 136 residues long: Lipoprotein YghG (136 aa).

An N-terminal signal peptide occupies residues 1–24; the sequence is MSIKQMPGRVLISLLLSVTGLLSG. Residue Cys25 is the site of N-palmitoyl cysteine attachment. Cys25 is lipidated: S-diacylglycerol cysteine.

Belongs to the GspS/AspS pilotin family.

Its subcellular location is the cell outer membrane. Functionally, involved in a type II secretion system (T2SS, formerly general secretion pathway, GSP) for the export of folded proteins across the outer membrane. In a functional T2SS this subunit helps assemble the outer membrane channel. This Escherichia coli (strain K12) protein is Lipoprotein YghG (yghG).